Here is a 145-residue protein sequence, read N- to C-terminus: Large ribosomal subunit protein bL9 (145 aa).

This sequence belongs to the bacterial ribosomal protein bL9 family.

Its function is as follows. Binds to the 23S rRNA. In Ureaplasma urealyticum serovar 10 (strain ATCC 33699 / Western), this protein is Large ribosomal subunit protein bL9.